A 275-amino-acid polypeptide reads, in one-letter code: Putative acyl-[acyl-carrier-protein] desaturase DesA2 (275 aa).

Fe cation contacts are provided by glutamate 107, histidine 110, glutamate 159, glutamate 189, and histidine 192.

This sequence belongs to the fatty acid desaturase type 2 family. As to quaternary structure, homodimer. The cofactor is Fe(2+).

Its pathway is lipid metabolism; fatty acid metabolism. May be a desaturase involved in mycobacterial fatty acid biosynthesis. The protein is Putative acyl-[acyl-carrier-protein] desaturase DesA2 (desA2) of Mycobacterium tuberculosis (strain CDC 1551 / Oshkosh).